Reading from the N-terminus, the 431-residue chain is Divergent protein kinase domain 1B (431 aa).

Residues 1–30 (MRKLRRLVHMVLFCPISKGLQSRLPGIKVK) are Cytoplasmic-facing. Residues 5–6 (RR) carry the May mediate ER retention motif. Residues 31–51 (YLFLAWLSVFVGSWVVYMHYS) traverse the membrane as a helical segment. Residues 52-431 (SYSELCRGHV…WKKISNTKYS (380 aa)) lie on the Lumenal side of the membrane. 2 disulfides stabilise this stretch: cysteine 57-cysteine 94 and cysteine 62-cysteine 117.

This sequence belongs to the DIPK family. Post-translationally, among the many cysteines in the lumenal domain, most are probably involved in disulfide bonds.

The protein resides in the endoplasmic reticulum membrane. The protein is Divergent protein kinase domain 1B (dipk1b) of Xenopus tropicalis (Western clawed frog).